The chain runs to 287 residues: Probable WRKY transcription factor 57 (287 aa).

Positions 86–99 (TSTNNNPSATSSSS) are enriched in low complexity. Residues 86-137 (TSTNNNPSATSSSSEDPAENSTASAEKTPPPETPVKEKKKAQKRIRQPRFAF) are disordered. Positions 122-132 (EKKKAQKRIRQ) are enriched in basic residues. Residues 141-206 (SDVDNLEDGY…YEGQHCHQTI (66 aa)) constitute a DNA-binding region (WRKY). The disordered stretch occupies residues 248–287 (DNNAPSPRLPRPTTEDTPAVSTPSEEGLLGDIVPQTMRNP). Residues 262–271 (EDTPAVSTPS) are compositionally biased toward polar residues.

The protein belongs to the WRKY group II-c family.

The protein resides in the nucleus. Its function is as follows. Transcription factor. Interacts specifically with the W box (5'-(T)TGAC[CT]-3'), a frequently occurring elicitor-responsive cis-acting element. The sequence is that of Probable WRKY transcription factor 57 (WRKY57) from Arabidopsis thaliana (Mouse-ear cress).